Consider the following 364-residue polypeptide: Developmentally-regulated GTP-binding protein 2 (364 aa).

Lys21 is subject to (3S)-3-hydroxylysine. Positions 63 to 288 (ARVALIGFPS…LLEMLWEYLA (226 aa)) constitute an OBG-type G domain. Residues 69–76 (GFPSVGKS), 94–98 (FTTLT), 115–118 (DLPG), 246–249 (NKID), and 269–271 (SCG) each bind GTP. 2 residues coordinate Mg(2+): Ser76 and Thr96. The TGS domain occupies 288-363 (ALTCIYTKKR…EHEDVIQIVK (76 aa)).

It belongs to the TRAFAC class OBG-HflX-like GTPase superfamily. OBG GTPase family. Interacts with RWDD1; this interaction confers protection to polyubiquitination and proteolytic degradation. Interacts with JMJD7; this interaction is direct. It depends on Mg(2+) as a cofactor. In terms of processing, polyubiquitinated. Hydroxylated (with S stereochemistry) at C-3 of Lys-21 by JMJD7. As to expression, fairly high levels in liver, heart, kidney, and brain. Very low levels in lung, spleen, testis and skeletal muscle.

It localises to the nucleus. The protein localises to the cytoplasm. The catalysed reaction is GTP + H2O = GDP + phosphate + H(+). Catalyzes the conversion of GTP to GDP through hydrolysis of the gamma-phosphate bond in GTP. When hydroxylated at C-3 of 'Lys-21' by JMJD7, may bind to RNA and play a role in translation. This Mus musculus (Mouse) protein is Developmentally-regulated GTP-binding protein 2 (Drg2).